A 297-amino-acid polypeptide reads, in one-letter code: MSKIFVNPSAIRAGLADLEMAEETVDLINRNIEDNQAHLQGEPIEVDNLPEDMKRLHLDDEKSSNLGEMVRVGEGKYREDFQMDEGEDPNLLFQSYLDNVGVQIVRQMRSGERFLKIWSQTVEEIVSYVTVNFPNPPRRSSEDKSTQTTGRELKKETTSAFSQRESQPSKARMVAQVAPGPPALEWSATNEEDDLSVEAEIAHQIAESFSKKYKFPSRSSGIFLYNFEQLKMNLDDIVKEAKNVPGVTRLAHDGSKIPLRCVLGWVALANSKKFQLLVEADKLSKIMQDDLNRYTSC.

Residues 49-58 (LPEDMKRLHL) carry the Nuclear export signal motif. Ser63 and Ser64 each carry phosphoserine; by host. The disordered stretch occupies residues 132–177 (NFPNPPRRSSEDKSTQTTGRELKKETTSAFSQRESQPSKARMVAQV). The tract at residues 138-172 (RRSSEDKSTQTTGRELKKETTSAFSQRESQPSKAR) is DYNLL1 and DYNLL2 binding. The segment covering 139–157 (RSSEDKSTQTTGRELKKET) has biased composition (basic and acidic residues). The segment covering 158-169 (TSAFSQRESQPS) has biased composition (polar residues). Residues Ser162 and Ser210 each carry the phosphoserine; by host PKC modification. Positions 211-214 (KKYK) match the Nuclear localization signal motif. Ser271 is modified (phosphoserine; by host PKC).

Belongs to the lyssavirus protein P family. Homotrimer when phosphorylated. This trimer is stabilized by binding to the L protein. Binds soluble protein N, and ribonucleocapsid. Interacts with host DYNLL1 and DYNLL2; this interaction may play a role in intracellular microtubule-dependent virus transport of incoming virus. Interacts with host STAT1, STAT2 and PML. Interacts with host TBK1. As to quaternary structure, binds host PML. Post-translationally, phosphorylated by host PKC and by an unknown kinase.

The protein localises to the virion. It is found in the host cytoplasm. The protein resides in the host nucleus. Non catalytic polymerase cofactor and regulatory protein that plays a role in viral transcription and replication. Stabilizes the RNA polymerase L to the N-RNA template and binds the soluble protein N, preventing it from encapsidating non-genomic RNA. Also inhibits host IFN-alpha and IFN-beta signaling by binding and retaining phosphorylated STAT1 in the cytoplasm or by inhibiting the DNA binding of STAT1 in the nucleus. Might be involved, through interaction with host dynein, in intracellular microtubule-dependent virus transport of incoming virus from the synapse toward the cell body. Inhibits interferon induction pathways by interacting with host TBK1 and preventing the formation of dynamic cytoplasmic condensates that have liquid properties and that are essential for interferon production. The polypeptide is Phosphoprotein (P) (Rabies virus (strain CVS-11) (RABV)).